The primary structure comprises 512 residues: Glycerol kinase (512 aa).

Thr14 provides a ligand contact to ADP. Thr14, Thr15, and Ser16 together coordinate ATP. Residue Thr14 coordinates sn-glycerol 3-phosphate. Position 18 (Arg18) interacts with ADP. 4 residues coordinate sn-glycerol 3-phosphate: Arg83, Glu84, Tyr135, and Asp244. Residues Arg83, Glu84, Tyr135, Asp244, and Gln245 each contribute to the glycerol site. 4 residues coordinate ADP: Thr266, Gly309, Gly410, and Asn414. Thr266, Gly309, and Gly410 together coordinate ATP.

This sequence belongs to the FGGY kinase family.

It catalyses the reaction glycerol + ATP = sn-glycerol 3-phosphate + ADP + H(+). The protein operates within polyol metabolism; glycerol degradation via glycerol kinase pathway; sn-glycerol 3-phosphate from glycerol: step 1/1. Its activity is regulated as follows. Inhibited by fructose 1,6-bisphosphate (FBP). Its function is as follows. Key enzyme in the regulation of glycerol uptake and metabolism. Catalyzes the phosphorylation of glycerol to yield sn-glycerol 3-phosphate. The polypeptide is Glycerol kinase (Gluconobacter oxydans (strain 621H) (Gluconobacter suboxydans)).